The chain runs to 390 residues: Tryptophan synthase beta chain 2 (390 aa).

Lys83 bears the N6-(pyridoxal phosphate)lysine mark.

This sequence belongs to the TrpB family. In terms of assembly, tetramer of two alpha and two beta chains. Pyridoxal 5'-phosphate serves as cofactor.

The enzyme catalyses (1S,2R)-1-C-(indol-3-yl)glycerol 3-phosphate + L-serine = D-glyceraldehyde 3-phosphate + L-tryptophan + H2O. Its pathway is amino-acid biosynthesis; L-tryptophan biosynthesis; L-tryptophan from chorismate: step 5/5. Functionally, the beta subunit is responsible for the synthesis of L-tryptophan from indole and L-serine. The polypeptide is Tryptophan synthase beta chain 2 (trpB2) (Methanothermobacter marburgensis (strain ATCC BAA-927 / DSM 2133 / JCM 14651 / NBRC 100331 / OCM 82 / Marburg) (Methanobacterium thermoautotrophicum)).